The primary structure comprises 101 residues: NAD(P)H-quinone oxidoreductase subunit 4L, chloroplastic (101 aa).

The next 3 membrane-spanning stretches (helical) occupy residues 2–22 (MLEH…YGLI), 32–52 (MCLE…SDFF), and 61–81 (IFSI…LAIV).

This sequence belongs to the complex I subunit 4L family. NDH is composed of at least 16 different subunits, 5 of which are encoded in the nucleus.

It is found in the plastid. The protein localises to the chloroplast thylakoid membrane. It catalyses the reaction a plastoquinone + NADH + (n+1) H(+)(in) = a plastoquinol + NAD(+) + n H(+)(out). The enzyme catalyses a plastoquinone + NADPH + (n+1) H(+)(in) = a plastoquinol + NADP(+) + n H(+)(out). Functionally, NDH shuttles electrons from NAD(P)H:plastoquinone, via FMN and iron-sulfur (Fe-S) centers, to quinones in the photosynthetic chain and possibly in a chloroplast respiratory chain. The immediate electron acceptor for the enzyme in this species is believed to be plastoquinone. Couples the redox reaction to proton translocation, and thus conserves the redox energy in a proton gradient. In Guizotia abyssinica (Niger), this protein is NAD(P)H-quinone oxidoreductase subunit 4L, chloroplastic.